Here is a 136-residue protein sequence, read N- to C-terminus: MAREFSRTQRVAQEMQKEIAIILQREVKDPRIGMATVSGVEVSRDLAYAKVFVTFLNVLTEEHDSDVVKNGIKALNEASGFIRSLLGKAMRLRVVPELTFSYDNSLVEGMRMSNLVTNVVKNDEQRRASTDHKEEK.

The protein belongs to the RbfA family. As to quaternary structure, monomer. Binds 30S ribosomal subunits, but not 50S ribosomal subunits or 70S ribosomes.

It localises to the cytoplasm. In terms of biological role, one of several proteins that assist in the late maturation steps of the functional core of the 30S ribosomal subunit. Associates with free 30S ribosomal subunits (but not with 30S subunits that are part of 70S ribosomes or polysomes). Required for efficient processing of 16S rRNA. May interact with the 5'-terminal helix region of 16S rRNA. In Photorhabdus laumondii subsp. laumondii (strain DSM 15139 / CIP 105565 / TT01) (Photorhabdus luminescens subsp. laumondii), this protein is Ribosome-binding factor A.